We begin with the raw amino-acid sequence, 102 residues long: uncharacterized protein (102 aa).

This is an uncharacterized protein from Bacillus subtilis (strain 168).